Consider the following 253-residue polypeptide: Small ribosomal subunit protein uS3 (253 aa).

In terms of domain architecture, KH type-2 spans 21–92; it reads LNEFLTRELA…SVELYAEKVA (72 aa). The segment at 211 to 253 is disordered; the sequence is VEPKDEILPTTPISEQKGGKPDPQVPQQPPQQPPAMPPPVPTA. Pro residues predominate over residues 233–253; that stretch reads PQVPQQPPQQPPAMPPPVPTA.

It belongs to the universal ribosomal protein uS3 family.

The protein resides in the cytoplasm. Its subcellular location is the nucleus. It is found in the nucleolus. It localises to the mitochondrion inner membrane. The protein localises to the cytoskeleton. The protein resides in the spindle. The enzyme catalyses 2'-deoxyribonucleotide-(2'-deoxyribose 5'-phosphate)-2'-deoxyribonucleotide-DNA = a 3'-end 2'-deoxyribonucleotide-(2,3-dehydro-2,3-deoxyribose 5'-phosphate)-DNA + a 5'-end 5'-phospho-2'-deoxyribonucleoside-DNA + H(+). Its function is as follows. Component of the small ribosomal subunit. The ribosome is a large ribonucleoprotein complex responsible for the synthesis of proteins in the cell. Has endonuclease activity and plays a role in repair of damaged DNA. Also involved in other processes including regulation of transcription, translation of its cognate mRNA, spindle formation and chromosome movement during mitosis, and apoptosis. The chain is Small ribosomal subunit protein uS3 (RPS3) from Ambystoma mexicanum (Axolotl).